A 132-amino-acid chain; its full sequence is UPF0146 protein PF0123 (132 aa).

The protein belongs to the UPF0146 family.

The polypeptide is UPF0146 protein PF0123 (Pyrococcus furiosus (strain ATCC 43587 / DSM 3638 / JCM 8422 / Vc1)).